Here is a 267-residue protein sequence, read N- to C-terminus: Hydroxynaphthalene reductase-like protein Arp2 (267 aa).

Residues isoleucine 25, asparagine 45, aspartate 71, and asparagine 98 each coordinate NADP(+). Residues serine 147 and serine 148 each act as proton donor in the active site. NADP(+)-binding residues include tyrosine 162, lysine 166, valine 195, and threonine 197. Tyrosine 162 acts as the Proton acceptor in catalysis. Catalysis depends on lysine 166, which acts as the Lowers pKa of active site Tyr.

Belongs to the short-chain dehydrogenases/reductases (SDR) family.

Hydroxynaphthalene reductase-like protein; part of the Pks2 gene cluster that mediates the formation of infectious structures (appressoria), enabling these fungi to kill insects faster. The product of the Pks2 gene cluster is different from the one of Pks1 and has still not been identified. The protein is Hydroxynaphthalene reductase-like protein Arp2 of Metarhizium acridum (strain CQMa 102).